The following is a 249-amino-acid chain: Probable aquaporin TIP-type (249 aa).

Helical transmembrane passes span 22-42 and 56-76; these read AGLA…GSGI and AGLI…VSVG. Positions 85-87 match the NPA 1 motif; the sequence is NPA. 3 helical membrane passes run 103–123, 137–157, and 169–189; these read IVYI…LVFV, VGVG…VYTV, and IGII…LVGG. The short motif at 197–199 is the NPA 2 element; the sequence is NPA. The chain crosses the membrane as a helical span at residues 217–237; sequence YWAGPLIGGGIAGLVYEVLFI.

This sequence belongs to the MIP/aquaporin (TC 1.A.8) family. TIP (TC 1.A.8.10) subfamily. In terms of tissue distribution, expression is highest in root tips, with slightly lower levels of hybridizing mRNA in stems, and whole roots, and much lower levels in nodules and leaves.

It localises to the membrane. Its function is as follows. Aquaporins facilitate the transport of water and small neutral solutes across cell membranes. In Medicago sativa (Alfalfa), this protein is Probable aquaporin TIP-type (MCP1).